Consider the following 251-residue polypeptide: Triosephosphate isomerase (251 aa).

9–11 contributes to the substrate binding site; that stretch reads NWK. Catalysis depends on His95, which acts as the Electrophile. Glu167 (proton acceptor) is an active-site residue. Substrate is bound by residues Gly173, Ser213, and 234 to 235; that span reads GG. Ser213 carries the phosphoserine modification.

Belongs to the triosephosphate isomerase family. Homodimer.

It localises to the cytoplasm. It carries out the reaction D-glyceraldehyde 3-phosphate = dihydroxyacetone phosphate. It participates in carbohydrate biosynthesis; gluconeogenesis. It functions in the pathway carbohydrate degradation; glycolysis; D-glyceraldehyde 3-phosphate from glycerone phosphate: step 1/1. Involved in the gluconeogenesis. Catalyzes stereospecifically the conversion of dihydroxyacetone phosphate (DHAP) to D-glyceraldehyde-3-phosphate (G3P). This is Triosephosphate isomerase from Bacillus cereus (strain G9842).